The primary structure comprises 804 residues: Cyclic di-GMP-binding protein (804 aa).

The N-terminal stretch at 1 to 18 is a signal peptide; it reads MKMVSLIALLVFATGAQA. The Periplasmic segment spans residues 19-766; it reads APIASKAPAH…DWYMHNHPFR (748 aa). The interval 24-69 is disordered; the sequence is KAPAHQPTGSDLPPLPAAAPVAPAAQPSAQAVDPASAAPASDAGSA. Residues 767-787 traverse the membrane as a helical segment; it reads VIVVGLVGCLLVVAVLVRALF. The Cytoplasmic portion of the chain corresponds to 788–804; it reads RHAMFRRRQLQEERQKS.

It belongs to the AcsB/BcsB family. As to quaternary structure, tightly associated with the cellulose synthase catalytic subunit.

The protein resides in the cell inner membrane. Its pathway is glycan metabolism; bacterial cellulose biosynthesis. Binds the cellulose synthase activator, bis-(3'-5') cyclic diguanylic acid (c-di-GMP). The sequence is that of Cyclic di-GMP-binding protein (bcsBI) from Komagataeibacter xylinus (Gluconacetobacter xylinus).